A 140-amino-acid chain; its full sequence is MMSLLPLLLIGIVLPATQAKDYGKCELNQILRERGVDKVISLPELICTMFHSSGFSTETEVDNNNHKEYGIFQISSNGWCAEKQEDVERSVCGILCSKLLDDDITDDIVCAKKILQLPERLDHWKAHNTFCRENLDQWNC.

Residues Met-1–Ala-19 form the signal peptide. In terms of domain architecture, C-type lysozyme spans Lys-20–Cys-140. Cystine bridges form between Cys-25/Cys-140, Cys-47/Cys-131, Cys-80/Cys-96, and Cys-92/Cys-110. Lys-98, Asp-101, Asp-103, Asp-106, and Asp-107 together coordinate Ca(2+).

As to quaternary structure, lactose synthase (LS) is a heterodimer of a catalytic component, beta1,4-galactosyltransferase (beta4Gal-T1) and a regulatory component, alpha-lactalbumin (LA). Mammary gland specific. Secreted in milk.

It is found in the secreted. In terms of biological role, regulatory subunit of lactose synthase, changes the substrate specificity of galactosyltransferase in the mammary gland making glucose a good acceptor substrate for this enzyme. This enables LS to synthesize lactose, the major carbohydrate component of milk. In other tissues, galactosyltransferase transfers galactose onto the N-acetylglucosamine of the oligosaccharide chains in glycoproteins. The sequence is that of Alpha-lactalbumin (LALBA) from Trichosurus vulpecula (Brush-tailed possum).